A 425-amino-acid polypeptide reads, in one-letter code: Trigger factor (425 aa).

The PPIase FKBP-type domain occupies 158-231 (GDLVRISMEV…VQEVYRRTLP (74 aa)).

This sequence belongs to the FKBP-type PPIase family. Tig subfamily.

Its subcellular location is the cytoplasm. The catalysed reaction is [protein]-peptidylproline (omega=180) = [protein]-peptidylproline (omega=0). Functionally, involved in protein export. Acts as a chaperone by maintaining the newly synthesized protein in an open conformation. Functions as a peptidyl-prolyl cis-trans isomerase. This is Trigger factor from Thermotoga neapolitana (strain ATCC 49049 / DSM 4359 / NBRC 107923 / NS-E).